The sequence spans 299 residues: Transcription elongation factor A protein 2 (299 aa).

In terms of domain architecture, TFIIS N-terminal spans 6–83; the sequence is EEIARIARRL…KSWKKLLDAS (78 aa). A Glycyl lysine isopeptide (Lys-Gly) (interchain with G-Cter in ubiquitin) cross-link involves residue lysine 58. Residues serine 60 and serine 100 each carry the phosphoserine modification. The disordered stretch occupies residues 86-128; it reads KARERGRGMPLPTSSRDASEAPDPSRKRPELPRAPSTPRITTF. A compositionally biased stretch (basic and acidic residues) spans 102–116; it reads DASEAPDPSRKRPEL. Residues 138-254 form the TFIIS central domain; that stretch reads VRNKCREMLT…EHQMARTGGT (117 aa). The TFIIS-type zinc-finger motif lies at 257 to 297; that stretch reads DLFTCGKCRKKNCTYTQVQTRSSDEPMTTFVVCNECGNRWK. Residues cysteine 261, cysteine 264, cysteine 289, and cysteine 292 each contribute to the Zn(2+) site.

This sequence belongs to the TFS-II family. As to quaternary structure, interacts with the basal transcription factor GTF2B. Interacts with REXO1. Testis and ovary specific.

Its subcellular location is the nucleus. In terms of biological role, necessary for efficient RNA polymerase II transcription elongation past template-encoded arresting sites. The arresting sites in DNA have the property of trapping a certain fraction of elongating RNA polymerases that pass through, resulting in locked ternary complexes. Cleavage of the nascent transcript by S-II allows the resumption of elongation from the new 3'-terminus. This is Transcription elongation factor A protein 2 (TCEA2) from Homo sapiens (Human).